We begin with the raw amino-acid sequence, 419 residues long: Inositol-tetrakisphosphate 1-kinase (419 aa).

Residue lysine 18 coordinates 1D-myo-inositol 1,3,4-trisphosphate. Positions 106 and 157 each coordinate ATP. The ATP-grasp domain maps to 117 to 325; the sequence is EAYMKDDRIC…IASVLQGQSS (209 aa). Residues histidine 167 and lysine 199 each contribute to the 1D-myo-inositol 1,3,4-trisphosphate site. ATP contacts are provided by residues 188–199, serine 214, serine 232, and serine 236; that span reads QNFINHNAVLYK. Residues aspartate 281, aspartate 295, and asparagine 297 each contribute to the Mg(2+) site. Asparagine 297 contacts 1D-myo-inositol 1,3,4-trisphosphate. Lysine 388 carries the N6-acetyllysine; by EP300 and CREBBP modification. Serine 401 carries the post-translational modification Phosphoserine. At lysine 415 the chain carries N6-acetyllysine; by EP300 and CREBBP.

It belongs to the ITPK1 family. In terms of assembly, monomer. Interacts with GPS1/COPS1. It depends on Mg(2+) as a cofactor. Post-translationally, acetylation by EP300 and CREBBP destabilizes ITPK1, and down-regulates enzymatic activity. Deacetylated by SIRT1.

It carries out the reaction 1D-myo-inositol 3,4,5,6-tetrakisphosphate + ATP = 1D-myo-inositol 1,3,4,5,6-pentakisphosphate + ADP + H(+). It catalyses the reaction 1D-myo-inositol 1,3,4-trisphosphate + ATP = 1D-myo-inositol 1,3,4,5-tetrakisphosphate + ADP + H(+). The enzyme catalyses 1D-myo-inositol 1,3,4-trisphosphate + ATP = 1D-myo-inositol 1,3,4,6-tetrakisphosphate + ADP + H(+). The catalysed reaction is 1D-myo-inositol 3,4,6-trisphosphate + ATP = 1D-myo-inositol 1,3,4,6-tetrakisphosphate + ADP + H(+). It carries out the reaction 1D-myo-inositol 1,3,4-trisphosphate + 1D-myo-inositol 1,3,4,5,6-pentakisphosphate = 1D-myo-inositol 3,4,5,6-tetrakisphosphate + 1D-myo-inositol 1,3,4,6-tetrakisphosphate. It catalyses the reaction 1D-myo-inositol 1,3,4-trisphosphate + 1D-myo-inositol 1,3,4,5,6-pentakisphosphate = 1D-myo-inositol 3,4,5,6-tetrakisphosphate + 1D-myo-inositol 1,3,4,5-tetrakisphosphate. Functionally, kinase that can phosphorylate various inositol polyphosphate such as Ins(3,4,5,6)P4 or Ins(1,3,4)P3. Phosphorylates Ins(3,4,5,6)P4 at position 1 to form Ins(1,3,4,5,6)P5. This reaction is thought to have regulatory importance, since Ins(3,4,5,6)P4 is an inhibitor of plasma membrane Ca(2+)-activated Cl(-) channels, while Ins(1,3,4,5,6)P5 is not. Also phosphorylates Ins(1,3,4)P3 on O-5 and O-6 to form Ins(1,3,4,6)P4, an essential molecule in the hexakisphosphate (InsP6) pathway. Also acts as an inositol polyphosphate phosphatase that dephosphorylates Ins(1,3,4,5)P4 and Ins(1,3,4,6)P4 to Ins(1,3,4)P3, and Ins(1,3,4,5,6)P5 to Ins(3,4,5,6)P4. May also act as an isomerase that interconverts the inositol tetrakisphosphate isomers Ins(1,3,4,5)P4 and Ins(1,3,4,6)P4 in the presence of ADP and magnesium. Probably acts as the rate-limiting enzyme of the InsP6 pathway. Modifies TNF-alpha-induced apoptosis by interfering with the activation of TNFRSF1A-associated death domain. Plays an important role in MLKL-mediated necroptosis. Produces highly phosphorylated inositol phosphates such as inositolhexakisphosphate (InsP6) which bind to MLKL mediating the release of an N-terminal auto-inhibitory region leading to its activation. Essential for activated phospho-MLKL to oligomerize and localize to the cell membrane during necroptosis. The polypeptide is Inositol-tetrakisphosphate 1-kinase (ITPK1) (Bos taurus (Bovine)).